A 170-amino-acid polypeptide reads, in one-letter code: Translocon-associated protein subunit gamma (170 aa).

The Lumenal segment spans residues 1–24; sequence MAEVDEFSAFRHENDVSIEQRIVY. The helical transmembrane segment at 25 to 45 threads the bilayer; the sequence is FINSLIVALVPVYLYHAIFFM. The Cytoplasmic segment spans residues 46-51; it reads SIDDHM. A helical membrane pass occupies residues 52 to 72; it reads IIYGSVTLFAAIVLTFAYNNI. At 73–121 the chain is on the lumenal side; it reads YRMKRLKLSASREHISIASKNKVGDKKKFAAAQKEVQALVTSHEAIAAS. A helical transmembrane segment spans residues 122-141; it reads IMYNNAVFLICVSIFSFIIF. Topologically, residues 142–145 are cytoplasmic; the sequence is KNVP. A helical membrane pass occupies residues 146-168; it reads LVYNYIISISLGAGLTSFLSTSS.

Belongs to the TRAP-gamma family. As to quaternary structure, heterotrimer of TRAP-alpha, TRAP-beta and TRAP-gamma.

It localises to the endoplasmic reticulum membrane. TRAP proteins are part of a complex whose function is to bind calcium to the ER membrane and thereby regulate the retention of ER resident proteins. The chain is Translocon-associated protein subunit gamma (ssr3) from Dictyostelium discoideum (Social amoeba).